Reading from the N-terminus, the 391-residue chain is 1-deoxy-D-xylulose 5-phosphate reductoisomerase (391 aa).

5 residues coordinate NADPH: Thr11, Gly12, Ser13, Ile14, and Asn126. Lys127 contributes to the 1-deoxy-D-xylulose 5-phosphate binding site. Glu128 is a binding site for NADPH. A Mn(2+)-binding site is contributed by Asp152. Ser153, Glu154, Ser176, and His199 together coordinate 1-deoxy-D-xylulose 5-phosphate. Position 154 (Glu154) interacts with Mn(2+). NADPH is bound at residue Gly205. Residues Ser212, Asn217, Lys218, and Glu221 each contribute to the 1-deoxy-D-xylulose 5-phosphate site. Glu221 contacts Mn(2+).

The protein belongs to the DXR family. Requires Mg(2+) as cofactor. It depends on Mn(2+) as a cofactor.

It catalyses the reaction 2-C-methyl-D-erythritol 4-phosphate + NADP(+) = 1-deoxy-D-xylulose 5-phosphate + NADPH + H(+). The protein operates within isoprenoid biosynthesis; isopentenyl diphosphate biosynthesis via DXP pathway; isopentenyl diphosphate from 1-deoxy-D-xylulose 5-phosphate: step 1/6. Its function is as follows. Catalyzes the NADPH-dependent rearrangement and reduction of 1-deoxy-D-xylulose-5-phosphate (DXP) to 2-C-methyl-D-erythritol 4-phosphate (MEP). This is 1-deoxy-D-xylulose 5-phosphate reductoisomerase from Acidithiobacillus ferrooxidans (strain ATCC 53993 / BNL-5-31) (Leptospirillum ferrooxidans (ATCC 53993)).